The following is a 155-amino-acid chain: Methylated-DNA--protein-cysteine methyltransferase (155 aa).

Cys119 (nucleophile; methyl group acceptor) is an active-site residue.

It belongs to the MGMT family.

It localises to the cytoplasm. The enzyme catalyses a 6-O-methyl-2'-deoxyguanosine in DNA + L-cysteinyl-[protein] = S-methyl-L-cysteinyl-[protein] + a 2'-deoxyguanosine in DNA. It carries out the reaction a 4-O-methyl-thymidine in DNA + L-cysteinyl-[protein] = a thymidine in DNA + S-methyl-L-cysteinyl-[protein]. Functionally, involved in the cellular defense against the biological effects of O6-methylguanine (O6-MeG) and O4-methylthymine (O4-MeT) in DNA. Repairs the methylated nucleobase in DNA by stoichiometrically transferring the methyl group to a cysteine residue in the enzyme. This is a suicide reaction: the enzyme is irreversibly inactivated. The sequence is that of Methylated-DNA--protein-cysteine methyltransferase from Sulfolobus acidocaldarius (strain ATCC 33909 / DSM 639 / JCM 8929 / NBRC 15157 / NCIMB 11770).